Reading from the N-terminus, the 253-residue chain is 23S rRNA (cytidine-2'-O)-methyltransferase TlyA (253 aa).

Residues 1–73 (MRFDFFVSKR…LKLDLLSEIY (73 aa)) form the S4 RNA-binding domain.

This sequence belongs to the TlyA family.

It catalyses the reaction cytidine(1920) in 23S rRNA + S-adenosyl-L-methionine = 2'-O-methylcytidine(1920) in 23S rRNA + S-adenosyl-L-homocysteine + H(+). Its function is as follows. Catalyzes the 2'-O-methylation at nucleotide C1920 in 23S rRNA. Enhances motility. Enhances biofilm formation. Involved in the assembly of 70S ribosomes. Involved in virulence by promoting adherence and invasion to host cells. Involved in pathogenicity by modulating secretion of host-protective chemokine interleukin 8 (IL-8). Involved in susceptibility to antibiotic capreomycin. In Campylobacter jejuni subsp. jejuni serotype O:23/36 (strain 81-176), this protein is 23S rRNA (cytidine-2'-O)-methyltransferase TlyA.